The sequence spans 107 residues: MLRLYPGPMVTEAEGKGGPEMASLSSSVVPVSFISTLRESVLDPGVGGEGASDKQRSKLSLSHSMIPAAKIHTELCLPAFFSPAGTQRRFQQPQHHLTLSIIHTAAR.

Residues 1 to 21 form a disordered region; it reads MLRLYPGPMVTEAEGKGGPEM.

Detected in retina and placenta.

The protein localises to the cytoplasm. The protein is Age-related maculopathy susceptibility protein 2 (ARMS2) of Homo sapiens (Human).